Here is a 177-residue protein sequence, read N- to C-terminus: MALNLSQKQEVVAELADIAAKAHSLIAAEYAGITVSQMTAMRKQARETGVFLKVVKNTLAVRAVEGTDFAVAADKLVGPLLYAFSMEEPGAAGRLIKEFAKGNDKLQAKVVSIGGELFPASHVDVLASLPTLDQALAMLARVLSEPAAMFARAVKAVGDKQGGGDEAAAPVAETAEA.

This sequence belongs to the universal ribosomal protein uL10 family. As to quaternary structure, part of the ribosomal stalk of the 50S ribosomal subunit. The N-terminus interacts with L11 and the large rRNA to form the base of the stalk. The C-terminus forms an elongated spine to which L12 dimers bind in a sequential fashion forming a multimeric L10(L12)X complex.

In terms of biological role, forms part of the ribosomal stalk, playing a central role in the interaction of the ribosome with GTP-bound translation factors. This chain is Large ribosomal subunit protein uL10, found in Xanthomonas campestris pv. campestris (strain 8004).